A 336-amino-acid polypeptide reads, in one-letter code: UPF0324 membrane protein SP_0034 (336 aa).

8 helical membrane-spanning segments follow: residues 65–84 (LLQY…QVFA), 91–113 (PVIL…FFAL), 118–140 (ATLV…APVI), 153–175 (VIFF…LHLS), 211–233 (SATI…LSYW), 249–271 (VFPL…TSLG), 286–305 (FLIV…VAMV), and 312–334 (ILLG…TLIG).

Belongs to the UPF0324 family.

The protein localises to the cell membrane. The sequence is that of UPF0324 membrane protein SP_0034 from Streptococcus pneumoniae serotype 4 (strain ATCC BAA-334 / TIGR4).